A 686-amino-acid polypeptide reads, in one-letter code: MTDALLPAAPQPLEKENDGYFRKGCNPLAQTGRSKLQNQRAALNQQILKAVRMRTGAENLLKVATNSKVREQVRLELSFVNSDLQMLKEELEGLNISVGVYQNTEEAFTIPLIPLGLKETKDVDFAVVLKDFILEHYSEDGYLYEDEIADLMDLRQACRTPSRDEAGVELLMTYFIQLGFVESRFFPPTRQMGLLFTWYDSLTGVPVSQQNLLLEKASVLFNTGALYTQIGTRCDRQTQAGLESAIDAFQRAAGVLNYLKDTFTHTPSYDMSPAMLSVLVKMMLAQAQESVFEKISLPGIRNEFFMLVKVAQEAAKVGEVYQQLHAAMSQAPVKENIPYSWASLACVKAHHYAALAHYFTAILLIDHQVKPGTDLDHQEKCLSQLYDHMPEGLTPLATLKNDQQRRQLGKSHLRRAMAHHEESVREASLCKKLRSIEVLQKVLCAAQERSRLTYAQHQEEDDLLNLIDAPSVVAKTEQEVDIILPQFSKLTVTDFFQKLGPLSVFSANKRWTPPRSIRFTAEEGDLGFTLRGNAPVQVHFLDPYCSASVAGAREGDYIVSIQLVDCKWLTLSEVMKLLKSFGEDEIEMKVVSLLDSTSSMHNKSATYSVGMQKTYSMICLAIDDDDKTDKTKKISKKLSFLSWGTNKNRQKSASTLCLPSVGAARPQVKKKLPSPFSLLNSDSSWY.

The REM-1 domain occupies 26-100 (NPLAQTGRSK…LEGLNISVGV (75 aa)). Residues 46–66 (QILKAVRMRTGAENLLKVATN) form an interaction with Rho region. The BRO1 domain maps to 111–460 (PLIPLGLKET…RLTYAQHQEE (350 aa)). Residues 515–593 (RSIRFTAEEG…DEIEMKVVSL (79 aa)) enclose the PDZ domain. The residue at position 655 (threonine 655) is a Phosphothreonine.

The protein belongs to the RHPN family. As to quaternary structure, interacts with GTP-bound RhoA and RhoB. Interacts with both GTP- and GDP-bound RhoA. According to PubMed:12473120, it does not interact with RhoA. Interacts with KRT18. In terms of tissue distribution, widely expressed. Highly expressed in prostate, trachea, stomach, colon, thyroid and pancreas. Expressed at lower level in brain, spinal cord, kidney, placenta and liver.

Its subcellular location is the cytoplasm. It is found in the perinuclear region. In terms of biological role, binds specifically to GTP-Rho. May function in a Rho pathway to limit stress fiber formation and/or increase the turnover of F-actin structures in the absence of high levels of RhoA activity. This chain is Rhophilin-2 (RHPN2), found in Homo sapiens (Human).